Reading from the N-terminus, the 983-residue chain is Poly [ADP-ribose] polymerase 1 (983 aa).

2 consecutive PARP-type zinc fingers follow at residues 8-91 (WRAE…ESGA) and 114-194 (YGIE…KKAL). Residues Cys20, Cys23, His52, Cys55, Cys126, Cys129, His156, and Cys159 each contribute to the Zn(2+) site. Residues 197 to 246 (AKTETAEARQTNSRAGTKRKNDSVDNEKSKLAKSSFDMSTSGALQPCSKE) are disordered. Basic and acidic residues predominate over residues 215–226 (RKNDSVDNEKSK). Residues 236–375 (TSGALQPCSK…SVKPKRILRP (140 aa)) form the PADR1 zinc-binding domain. The tract at residues 301–345 (GPLALCPMCSGHLSFSGGLYRCHGYISEWSKCSHSTLDPDRIKGK) is zinc ribbon. Cys306, Cys309, Cys322, and Cys332 together coordinate Zn(2+). The tract at residues 369–397 (PKRILRPVLSGETSQGQGSKDATDSSRSE) is disordered. A compositionally biased stretch (polar residues) spans 379–388 (GETSQGQGSK). One can recognise a BRCT domain in the interval 394–484 (SRSERLADLK…RKLPFDKYKI (91 aa)). The WGR domain occupies 511-611 (HCHILEDGNS…TNFQKQPGKF (101 aa)). Residues 633-751 (SSNLAPSLIE…DIEIASRIVG (119 aa)) form the PARP alpha-helical domain. One can recognise a PARP catalytic domain in the interval 758–983 (ESLDDKYKKL…LLKVRFKHKR (226 aa)).

It belongs to the ARTD/PARP family.

It localises to the nucleus. It carries out the reaction NAD(+) + (ADP-D-ribosyl)n-acceptor = nicotinamide + (ADP-D-ribosyl)n+1-acceptor + H(+).. The enzyme catalyses L-aspartyl-[protein] + NAD(+) = 4-O-(ADP-D-ribosyl)-L-aspartyl-[protein] + nicotinamide. It catalyses the reaction L-glutamyl-[protein] + NAD(+) = 5-O-(ADP-D-ribosyl)-L-glutamyl-[protein] + nicotinamide. Functionally, involved in the base excision repair (BER) pathway, by catalyzing the poly(ADP-ribosyl)ation of a limited number of acceptor proteins involved in chromatin architecture and in DNA metabolism. This modification follows DNA damages and appears as an obligatory step in a detection/signaling pathway leading to the reparation of DNA strand breaks. The sequence is that of Poly [ADP-ribose] polymerase 1 (PARP1) from Arabidopsis thaliana (Mouse-ear cress).